Reading from the N-terminus, the 362-residue chain is Adenosine deaminase (362 aa).

The Zn(2+) site is built by histidine 19 and histidine 21. Positions 21, 23, and 181 each coordinate substrate. Histidine 208 provides a ligand contact to Zn(2+). Catalysis depends on glutamate 211, which acts as the Proton donor. Position 300 (aspartate 300) interacts with Zn(2+).

Belongs to the metallo-dependent hydrolases superfamily. Adenosine and AMP deaminases family. Adenosine deaminase subfamily. Zn(2+) is required as a cofactor.

It carries out the reaction adenosine + H2O + H(+) = inosine + NH4(+). It catalyses the reaction 2'-deoxyadenosine + H2O + H(+) = 2'-deoxyinosine + NH4(+). Catalyzes the hydrolytic deamination of adenosine and 2-deoxyadenosine. The protein is Adenosine deaminase of Mycobacterium ulcerans (strain Agy99).